Reading from the N-terminus, the 188-residue chain is Transcription factor E (188 aa).

The region spanning 9–98 (DLEVLRDVTL…SWRLNLREVL (90 aa)) is the HTH TFE/IIEalpha-type domain.

The protein belongs to the TFE family. In terms of assembly, monomer. Interaction with RNA polymerase subunits RpoF and RpoE is necessary for Tfe stimulatory transcription activity. Able to interact with Tbp and RNA polymerase in the absence of DNA promoter. Interacts both with the preinitiation and elongation complexes.

Functionally, transcription factor that plays a role in the activation of archaeal genes transcribed by RNA polymerase. Facilitates transcription initiation by enhancing TATA-box recognition by TATA-box-binding protein (Tbp), and transcription factor B (Tfb) and RNA polymerase recruitment. Not absolutely required for transcription in vitro, but particularly important in cases where Tbp or Tfb function is not optimal. It dynamically alters the nucleic acid-binding properties of RNA polymerases by stabilizing the initiation complex and destabilizing elongation complexes. Seems to translocate with the RNA polymerase following initiation and acts by binding to the non template strand of the transcription bubble in elongation complexes. The sequence is that of Transcription factor E from Methanopyrus kandleri (strain AV19 / DSM 6324 / JCM 9639 / NBRC 100938).